Consider the following 219-residue polypeptide: Probable N-acetyltransferase camello (219 aa).

A run of 2 helical transmembrane segments spans residues 42–62 (FYFI…SYVL) and 64–84 (LTSL…EFHG). Positions 62–218 (LSLTSLVALL…TVIYYRYDIK (157 aa)) constitute an N-acetyltransferase domain.

This sequence belongs to the camello family. At the beginning of gastrulation, expressed in deep cells of the presumptive mesoderm. At later gastrulation stages, expressed at the interface between already involuted and preinvoluted mesoderm. At late neurula and tailbud stages, expressed in the deep mass of cells lying ventrally and laterally to the closed blastopore.

The protein resides in the golgi apparatus membrane. Functionally, plays a role in regulation of gastrulation, possibly by controlled reduction of cell adhesion which is necessary for optimal cell motility. This chain is Probable N-acetyltransferase camello, found in Xenopus laevis (African clawed frog).